The primary structure comprises 494 residues: UPF0371 protein SPH_0451 (494 aa).

Belongs to the UPF0371 family.

The chain is UPF0371 protein SPH_0451 from Streptococcus pneumoniae (strain Hungary19A-6).